The sequence spans 198 residues: Virion membrane protein A17 precursor homolog (198 aa).

Topologically, residues 1 to 55 (MDNNYLNYYNVFEEFDAGAGIKEKELFTEEQQLSFLPKKGLGNGGFDGVERLYSN) are virion surface. The helical transmembrane segment at 56-76 (IINNNDIKSLLALIMLVFAIN) threads the bilayer. The Intravirion portion of the chain corresponds to 77–145 (TNSLVALIFI…TSKISKGFKR (69 aa)). A helical membrane pass occupies residues 146–166 (AIDVVLLVILGFYIVKIYGID). Over 167-198 (RQISIPSRRYCRQMSGPSSLENLNAFQTHSNY) the chain is Virion surface. Y198 carries the phosphotyrosine modification.

The protein belongs to the chordopoxvirinae A17 family. Interacts (via N-terminus) with D13 scaffold; this interaction helps D13 to associate with membranes. Interacts with A14. Interacts with A27; this interaction allows A27 to be anchored in the mature virion (MV) membrane. Part of a complex composed of A17, A25, A26 and A27. The 22 kDa precursor is probably cleaved by the I7 protease during virus maturation. Post-translationally, phosphorylated on tyrosine and threonine. Its phosphorylation state is regulated by the F10 kinase and the H1 phosphatase. Phosphorylation by F10 kinase seems to be required to form the membranes associated with IV.

It localises to the virion membrane. Its function is as follows. Envelope protein which participates in virus morphogenesis. Needed for an early step in viral crescent membrane formation by interacting with D13 scaffold protein. Its interaction with D13 scaffold protein leads to the formation of rigid, crescent-shaped membranes that assemble around the cytoplasmic virus factory. Membrane anchor for the protein A27. A17-A27 virus envelope protein might be involved in fusion or attachment, and can further associate to A26. This Fowlpox virus (strain NVSL) (FPV) protein is Virion membrane protein A17 precursor homolog.